A 585-amino-acid polypeptide reads, in one-letter code: Polyadenylate-binding protein, cytoplasmic and nuclear (585 aa).

A disordered region spans residues 14–37; it reads QLKIEEQTAPTTTESETPKVETSG. 4 consecutive RRM domains span residues 38–116, 126–203, 219–296, and 322–399; these read ASLY…WSQR, GNIY…LHVS, TNVY…RAQK, and VNLF…IAQR. One can recognise a PABC domain in the interval 488–567; sequence GQFPRNGQQQ…AHAAYQKFKE (80 aa).

Belongs to the polyadenylate-binding protein type-1 family.

The protein localises to the cytoplasm. Its subcellular location is the nucleus. Functionally, binds the poly(A) tail of mRNA. Appears to be an important mediator of the multiple roles of the poly(A) tail in mRNA biogenesis, stability and translation. In the nucleus, involved in both mRNA cleavage and polyadenylation. Is also required for efficient mRNA export to the cytoplasm. Acts in concert with a poly(A)-specific nuclease (PAN) to affect poly(A) tail shortening, which may occur concomitantly with either nucleocytoplasmic mRNA transport or translational initiation. In the cytoplasm, stimulates translation initiation and regulates mRNA decay through translation termination-coupled poly(A) shortening, probably mediated by PAN. This chain is Polyadenylate-binding protein, cytoplasmic and nuclear (PAB1), found in Eremothecium gossypii (strain ATCC 10895 / CBS 109.51 / FGSC 9923 / NRRL Y-1056) (Yeast).